A 78-amino-acid polypeptide reads, in one-letter code: Acyl carrier protein (78 aa).

The region spanning 1 to 76 (MALFEDIQAV…DVVKYIEDNK (76 aa)) is the Carrier domain. The residue at position 36 (S36) is an O-(pantetheine 4'-phosphoryl)serine.

This sequence belongs to the acyl carrier protein (ACP) family. In terms of processing, 4'-phosphopantetheine is transferred from CoA to a specific serine of apo-ACP by AcpS. This modification is essential for activity because fatty acids are bound in thioester linkage to the sulfhydryl of the prosthetic group.

Its subcellular location is the cytoplasm. The protein operates within lipid metabolism; fatty acid biosynthesis. In terms of biological role, carrier of the growing fatty acid chain in fatty acid biosynthesis. This Helicobacter pylori (strain ATCC 700392 / 26695) (Campylobacter pylori) protein is Acyl carrier protein.